We begin with the raw amino-acid sequence, 164 residues long: UPF0305 protein MTH_812 (164 aa).

Belongs to the UPF0305 family.

This Methanothermobacter thermautotrophicus (strain ATCC 29096 / DSM 1053 / JCM 10044 / NBRC 100330 / Delta H) (Methanobacterium thermoautotrophicum) protein is UPF0305 protein MTH_812.